Here is a 450-residue protein sequence, read N- to C-terminus: Phosphoglucosamine mutase (450 aa).

Serine 102 acts as the Phosphoserine intermediate in catalysis. Mg(2+) contacts are provided by serine 102, aspartate 244, aspartate 246, and aspartate 248. The residue at position 102 (serine 102) is a Phosphoserine.

This sequence belongs to the phosphohexose mutase family. Mg(2+) serves as cofactor. In terms of processing, activated by phosphorylation.

It catalyses the reaction alpha-D-glucosamine 1-phosphate = D-glucosamine 6-phosphate. Functionally, catalyzes the conversion of glucosamine-6-phosphate to glucosamine-1-phosphate. The chain is Phosphoglucosamine mutase from Desulfovibrio desulfuricans (strain ATCC 27774 / DSM 6949 / MB).